Here is a 251-residue protein sequence, read N- to C-terminus: Glucosamine-6-phosphate deaminase (251 aa).

Residue aspartate 73 is the Proton acceptor; for enolization step of the active site. Catalysis depends on asparagine 142, which acts as the For ring-opening step. The Proton acceptor; for ring-opening step role is filled by histidine 144. Catalysis depends on glutamate 149, which acts as the For ring-opening step.

This sequence belongs to the glucosamine/galactosamine-6-phosphate isomerase family. NagB subfamily.

It carries out the reaction alpha-D-glucosamine 6-phosphate + H2O = beta-D-fructose 6-phosphate + NH4(+). It participates in amino-sugar metabolism; N-acetylneuraminate degradation; D-fructose 6-phosphate from N-acetylneuraminate: step 5/5. In terms of biological role, catalyzes the reversible isomerization-deamination of glucosamine 6-phosphate (GlcN6P) to form fructose 6-phosphate (Fru6P) and ammonium ion. In Rhodopirellula baltica (strain DSM 10527 / NCIMB 13988 / SH1), this protein is Glucosamine-6-phosphate deaminase.